The chain runs to 227 residues: Cytochrome c oxidase subunit 2 (227 aa).

Over 1 to 14 the chain is Mitochondrial intermembrane; sequence MAYPMQLGFQDATS. A helical transmembrane segment spans residues 15 to 45; the sequence is PIMEELLHFHDHTLMIVFLISSLVLYIISLM. The Mitochondrial matrix segment spans residues 46–59; that stretch reads LTTKLTHTSTMDAQ. The chain crosses the membrane as a helical span at residues 60–87; sequence EVETIWTILPAIILILIALPSLRILYMM. Topologically, residues 88-227 are mitochondrial intermembrane; sequence DEINNPSLTV…YFEKWSASML (140 aa). Cu cation contacts are provided by H161, C196, E198, C200, H204, and M207. E198 is a binding site for Mg(2+). At Y218 the chain carries Phosphotyrosine.

It belongs to the cytochrome c oxidase subunit 2 family. As to quaternary structure, component of the cytochrome c oxidase (complex IV, CIV), a multisubunit enzyme composed of 14 subunits. The complex is composed of a catalytic core of 3 subunits MT-CO1, MT-CO2 and MT-CO3, encoded in the mitochondrial DNA, and 11 supernumerary subunits COX4I, COX5A, COX5B, COX6A, COX6B, COX6C, COX7A, COX7B, COX7C, COX8 and NDUFA4, which are encoded in the nuclear genome. The complex exists as a monomer or a dimer and forms supercomplexes (SCs) in the inner mitochondrial membrane with NADH-ubiquinone oxidoreductase (complex I, CI) and ubiquinol-cytochrome c oxidoreductase (cytochrome b-c1 complex, complex III, CIII), resulting in different assemblies (supercomplex SCI(1)III(2)IV(1) and megacomplex MCI(2)III(2)IV(2)). Found in a complex with TMEM177, COA6, COX18, COX20, SCO1 and SCO2. Interacts with TMEM177 in a COX20-dependent manner. Interacts with COX20. Interacts with COX16. It depends on Cu cation as a cofactor.

The protein localises to the mitochondrion inner membrane. The catalysed reaction is 4 Fe(II)-[cytochrome c] + O2 + 8 H(+)(in) = 4 Fe(III)-[cytochrome c] + 2 H2O + 4 H(+)(out). In terms of biological role, component of the cytochrome c oxidase, the last enzyme in the mitochondrial electron transport chain which drives oxidative phosphorylation. The respiratory chain contains 3 multisubunit complexes succinate dehydrogenase (complex II, CII), ubiquinol-cytochrome c oxidoreductase (cytochrome b-c1 complex, complex III, CIII) and cytochrome c oxidase (complex IV, CIV), that cooperate to transfer electrons derived from NADH and succinate to molecular oxygen, creating an electrochemical gradient over the inner membrane that drives transmembrane transport and the ATP synthase. Cytochrome c oxidase is the component of the respiratory chain that catalyzes the reduction of oxygen to water. Electrons originating from reduced cytochrome c in the intermembrane space (IMS) are transferred via the dinuclear copper A center (CU(A)) of subunit 2 and heme A of subunit 1 to the active site in subunit 1, a binuclear center (BNC) formed by heme A3 and copper B (CU(B)). The BNC reduces molecular oxygen to 2 water molecules using 4 electrons from cytochrome c in the IMS and 4 protons from the mitochondrial matrix. The polypeptide is Cytochrome c oxidase subunit 2 (MT-CO2) (Boselaphus tragocamelus (Nilgai)).